We begin with the raw amino-acid sequence, 252 residues long: Imidazole glycerol phosphate synthase subunit HisF (252 aa).

Residues Asp11 and Asp130 contribute to the active site.

Belongs to the HisA/HisF family. Heterodimer of HisH and HisF.

It is found in the cytoplasm. The enzyme catalyses 5-[(5-phospho-1-deoxy-D-ribulos-1-ylimino)methylamino]-1-(5-phospho-beta-D-ribosyl)imidazole-4-carboxamide + L-glutamine = D-erythro-1-(imidazol-4-yl)glycerol 3-phosphate + 5-amino-1-(5-phospho-beta-D-ribosyl)imidazole-4-carboxamide + L-glutamate + H(+). The protein operates within amino-acid biosynthesis; L-histidine biosynthesis; L-histidine from 5-phospho-alpha-D-ribose 1-diphosphate: step 5/9. In terms of biological role, IGPS catalyzes the conversion of PRFAR and glutamine to IGP, AICAR and glutamate. The HisF subunit catalyzes the cyclization activity that produces IGP and AICAR from PRFAR using the ammonia provided by the HisH subunit. The sequence is that of Imidazole glycerol phosphate synthase subunit HisF from Dictyoglomus thermophilum (strain ATCC 35947 / DSM 3960 / H-6-12).